The primary structure comprises 292 residues: Oxidative stress-responsive serine-rich protein 1 (292 aa).

The segment at 27-175 is disordered; the sequence is SIASLSVGEG…SSDATQVSQA (149 aa). The span at 65–83 shows a compositional bias: basic residues; sequence STRKSSRGVVRTQRRRRSK. Thr143 and Thr233 each carry phosphothreonine.

The protein is Oxidative stress-responsive serine-rich protein 1 (OSER1) of Pongo abelii (Sumatran orangutan).